The following is a 580-amino-acid chain: D-erythrulose kinase (580 aa).

The 321-residue stretch at 7–327 folds into the DhaK domain; sequence DPARFTEDML…WAAPADTPAY (321 aa). His217 acts as the Tele-hemiaminal-histidine intermediate in catalysis. A disordered region spans residues 329–360; the sequence is KGAAQQHVSGERRSEATARSASSGPKLAELSD. The DhaL domain occupies 368–570; it reads RLVARAFDAM…LALCARTVAD (203 aa). Residues 397-403, 443-444, Gly485, Arg542, and 555-557 contribute to the ATP site; these read DGDHGRG, TS, and DAG.

The catalysed reaction is D-erythrulose + ATP = D-erythrulose 4-phosphate + ADP + H(+). Its pathway is carbohydrate metabolism; erythritol degradation. It functions in the pathway carbohydrate metabolism; D-threitol degradation. Catalyzes the phosphorylation of D-erythrulose to D-erythrulose-4P. Involved in the degradation pathways of erythritol and D-threitol, that allow M.smegmatis to grow on these compounds as the sole carbon source. This is D-erythrulose kinase from Mycolicibacterium smegmatis (strain ATCC 700084 / mc(2)155) (Mycobacterium smegmatis).